The chain runs to 349 residues: Anthranilate phosphoribosyltransferase (349 aa).

5-phospho-alpha-D-ribose 1-diphosphate contacts are provided by residues G82, 85-86 (GD), 92-95 (NVST), 110-118 (KHGNRAVSG), and S122. G82 is an anthranilate binding site. S94 provides a ligand contact to Mg(2+). N113 contributes to the anthranilate binding site. R168 is an anthranilate binding site. D227 and E228 together coordinate Mg(2+).

It belongs to the anthranilate phosphoribosyltransferase family. Homodimer. Requires Mg(2+) as cofactor.

The catalysed reaction is N-(5-phospho-beta-D-ribosyl)anthranilate + diphosphate = 5-phospho-alpha-D-ribose 1-diphosphate + anthranilate. Its pathway is amino-acid biosynthesis; L-tryptophan biosynthesis; L-tryptophan from chorismate: step 2/5. In terms of biological role, catalyzes the transfer of the phosphoribosyl group of 5-phosphorylribose-1-pyrophosphate (PRPP) to anthranilate to yield N-(5'-phosphoribosyl)-anthranilate (PRA). The polypeptide is Anthranilate phosphoribosyltransferase (Pseudomonas fluorescens (strain Pf0-1)).